A 460-amino-acid chain; its full sequence is V-type ATP synthase beta chain (460 aa).

The protein belongs to the ATPase alpha/beta chains family.

Its function is as follows. Produces ATP from ADP in the presence of a proton gradient across the membrane. The V-type beta chain is a regulatory subunit. This Anaeromyxobacter sp. (strain Fw109-5) protein is V-type ATP synthase beta chain.